A 459-amino-acid chain; its full sequence is Uterine milk protein (459 aa).

A signal peptide spans 1-25; that stretch reads MSHGRMNLALSLVFILCGLFNSIFC. An N-linked (GlcNAc...) asparagine glycan is attached at N268.

The protein belongs to the serpin family. UTMP subfamily.

In Bos taurus (Bovine), this protein is Uterine milk protein.